The chain runs to 533 residues: Glycogen synthase (533 aa).

Lys12 is an ADP-alpha-D-glucose binding site. Positions 497–533 (AALARADAASGRRRRAPEQSERLRQERLARQVALASK) are disordered. Residues 512-525 (APEQSERLRQERLA) show a composition bias toward basic and acidic residues.

This sequence belongs to the glycosyltransferase 1 family. Bacterial/plant glycogen synthase subfamily.

The enzyme catalyses [(1-&gt;4)-alpha-D-glucosyl](n) + ADP-alpha-D-glucose = [(1-&gt;4)-alpha-D-glucosyl](n+1) + ADP + H(+). The protein operates within glycan biosynthesis; glycogen biosynthesis. Functionally, synthesizes alpha-1,4-glucan chains using ADP-glucose. The polypeptide is Glycogen synthase (Burkholderia thailandensis (strain ATCC 700388 / DSM 13276 / CCUG 48851 / CIP 106301 / E264)).